A 713-amino-acid polypeptide reads, in one-letter code: Polyribonucleotide nucleotidyltransferase (713 aa).

The Mg(2+) site is built by Asp-498 and Asp-504. One can recognise a KH domain in the interval 565–631; that stretch reads PRILSLKVPV…RIEDLTREAK (67 aa). The 69-residue stretch at 633 to 701 folds into the S1 motif domain; it reads GEIYEGTVTR…ERGKIDLIRP (69 aa).

The protein belongs to the polyribonucleotide nucleotidyltransferase family. The cofactor is Mg(2+).

It is found in the cytoplasm. The catalysed reaction is RNA(n+1) + phosphate = RNA(n) + a ribonucleoside 5'-diphosphate. Functionally, involved in mRNA degradation. Catalyzes the phosphorolysis of single-stranded polyribonucleotides processively in the 3'- to 5'-direction. In Thermus thermophilus (strain ATCC 27634 / DSM 579 / HB8), this protein is Polyribonucleotide nucleotidyltransferase.